The following is a 291-amino-acid chain: Elongation factor Ts (291 aa).

Residues 79-82 (TDFV) are involved in Mg(2+) ion dislocation from EF-Tu.

It belongs to the EF-Ts family.

The protein resides in the cytoplasm. Its function is as follows. Associates with the EF-Tu.GDP complex and induces the exchange of GDP to GTP. It remains bound to the aminoacyl-tRNA.EF-Tu.GTP complex up to the GTP hydrolysis stage on the ribosome. The polypeptide is Elongation factor Ts (Ruegeria sp. (strain TM1040) (Silicibacter sp.)).